We begin with the raw amino-acid sequence, 318 residues long: Transaldolase (318 aa).

The active-site Schiff-base intermediate with substrate is the Lys-131.

This sequence belongs to the transaldolase family. Type 1 subfamily. As to quaternary structure, homodimer.

It is found in the cytoplasm. The enzyme catalyses D-sedoheptulose 7-phosphate + D-glyceraldehyde 3-phosphate = D-erythrose 4-phosphate + beta-D-fructose 6-phosphate. It functions in the pathway carbohydrate degradation; pentose phosphate pathway; D-glyceraldehyde 3-phosphate and beta-D-fructose 6-phosphate from D-ribose 5-phosphate and D-xylulose 5-phosphate (non-oxidative stage): step 2/3. Its function is as follows. Transaldolase is important for the balance of metabolites in the pentose-phosphate pathway. This chain is Transaldolase, found in Cellvibrio japonicus (strain Ueda107) (Pseudomonas fluorescens subsp. cellulosa).